The primary structure comprises 20 residues: Large ribosomal subunit protein uL5 (20 aa).

Belongs to the universal ribosomal protein uL5 family. As to quaternary structure, part of the 50S ribosomal subunit; part of the 5S rRNA/L5/L18/L25 subcomplex. Contacts the 5S rRNA and the P site tRNA. Forms a bridge to the 30S subunit in the 70S ribosome.

In terms of biological role, this is one of the proteins that bind and probably mediate the attachment of the 5S RNA into the large ribosomal subunit, where it forms part of the central protuberance. In the 70S ribosome it contacts protein S13 of the 30S subunit (bridge B1b), connecting the two subunits; this bridge is implicated in subunit movement. Contacts the P site tRNA; the 5S rRNA and some of its associated proteins might help stabilize positioning of ribosome-bound tRNAs. The chain is Large ribosomal subunit protein uL5 (rplE) from Bacillus cereus.